We begin with the raw amino-acid sequence, 411 residues long: Lysosome-associated membrane glycoprotein 3 (411 aa).

Positions 1 to 21 (MPGQISAVAVLFLSLTVILHG) are cleaved as a signal peptide. At 22-376 (YQIREKEFPK…NVNECLSDYT (355 aa)) the chain is on the lumenal side. The segment covering 172–192 (HKSTTNQRPTLSTNVLGTSTP) has biased composition (polar residues). Residues 172–204 (HKSTTNQRPTLSTNVLGTSTPTHKDRSTTSPVP) are disordered. Asparagine 227 carries N-linked (GlcNAc...) asparagine glycosylation. 2 cysteine pairs are disulfide-bonded: cysteine 232/cysteine 269 and cysteine 334/cysteine 371. A helical transmembrane segment spans residues 377–397 (VVLPMVAIIVVVICVVGLSVY). Topologically, residues 398-411 (KIRQRHQSSAYQRI) are cytoplasmic.

The protein belongs to the LAMP family. As to quaternary structure, monomer. Interacts with FURIN.

The protein resides in the cell surface. Its subcellular location is the lysosome membrane. The protein localises to the cytoplasmic vesicle membrane. It localises to the early endosome membrane. In terms of biological role, lysosomal membrane glycoprotein which plays a role in the unfolded protein response (UPR) that contributes to protein degradation and cell survival during proteasomal dysfunction. Plays a role in the process of fusion of the lysosome with the autophagosome, thereby modulating the autophagic process. Promotes hepatocellular lipogenesis through activation of the PI3K/Akt pathway. May also play a role in dendritic cell function and in adaptive immunity. This is Lysosome-associated membrane glycoprotein 3 (Lamp3) from Mus musculus (Mouse).